The following is a 66-amino-acid chain: Toxin BomPI (66 aa).

Residues 2 to 64 (RDAYIAQPEN…VPIRIEGKCH (63 aa)) form the LCN-type CS-alpha/beta domain. 4 cysteine pairs are disulfide-bonded: C12–C63, C16–C36, C22–C46, and C26–C48.

The protein belongs to the long (4 C-C) scorpion toxin superfamily. Sodium channel inhibitor family. Alpha subfamily. As to expression, expressed by the venom gland.

It is found in the secreted. Its function is as follows. Alpha toxins bind voltage-independently at site-3 of sodium channels (Nav) and inhibit the inactivation of the activated channels, thereby blocking neuronal transmission. The sequence is that of Toxin BomPI from Buthus occitanus mardochei (Moroccan scorpion).